The primary structure comprises 203 residues: Glycerol-3-phosphate acyltransferase (203 aa).

A run of 5 helical transmembrane segments spans residues 10–30 (LLLG…FGIM), 60–80 (LAAF…VFLA), 88–108 (AAQL…FLGF), 118–138 (LGTL…IWAI), and 162–182 (FTLG…LIFL).

Belongs to the PlsY family. In terms of assembly, probably interacts with PlsX.

Its subcellular location is the cell inner membrane. It carries out the reaction an acyl phosphate + sn-glycerol 3-phosphate = a 1-acyl-sn-glycero-3-phosphate + phosphate. It participates in lipid metabolism; phospholipid metabolism. Functionally, catalyzes the transfer of an acyl group from acyl-phosphate (acyl-PO(4)) to glycerol-3-phosphate (G3P) to form lysophosphatidic acid (LPA). This enzyme utilizes acyl-phosphate as fatty acyl donor, but not acyl-CoA or acyl-ACP. This Jannaschia sp. (strain CCS1) protein is Glycerol-3-phosphate acyltransferase.